We begin with the raw amino-acid sequence, 469 residues long: Probable periplasmic serine endoprotease DegP-like (469 aa).

An N-terminal signal peptide occupies residues 1-25 (MKVCQKYTAVLLVWLSAVVSMRAGA). Residues His-108, Asp-138, and Ser-211 each act as charge relay system in the active site. Substrate is bound by residues 209-211 (GNS) and 266-270 (LGVLI). 2 consecutive PDZ domains span residues 255–346 (LKDT…VRRG) and 352–457 (AVEI…IRQG).

This sequence belongs to the peptidase S1C family.

The protein resides in the periplasm. It carries out the reaction Acts on substrates that are at least partially unfolded. The cleavage site P1 residue is normally between a pair of hydrophobic residues, such as Val-|-Val.. Its function is as follows. Might be efficient in the degradation of transiently denatured and unfolded proteins which accumulate in the periplasm following stress conditions. The polypeptide is Probable periplasmic serine endoprotease DegP-like (mucD) (Hahella chejuensis (strain KCTC 2396)).